Reading from the N-terminus, the 4022-residue chain is Intermembrane lipid transfer protein VPS13B (4022 aa).

The Chorein N-terminal domain maps to 2-102 (LESYVTPILM…KDGIQDDHES (101 aa)). The tract at residues 100–134 (HESCGSNSTNRSTAESTKSSIKPRRMQQAAPTDPD) is disordered. Residues 103–119 (CGSNSTNRSTAESTKSS) are compositionally biased toward polar residues. Phosphoserine occurs at positions 414, 999, 1002, and 1033. Residues 1247–1314 (NLSPTSPETM…SVTLEQTTSN (68 aa)) form a disordered region. Polar residues-rich tracts occupy residues 1264–1292 (PVRS…TEGD) and 1302–1314 (FSDS…TTSN). Ser-1815 is subject to Phosphoserine. The span at 1860–1872 (KSQEQKNNEKTDK) shows a compositional bias: basic and acidic residues. The interval 1860-1880 (KSQEQKNNEKTDKSSLNLPEV) is disordered. The SHR-BD domain maps to 2631–2716 (HFVICNDTQE…RTASLIIKVQ (86 aa)). Residues 3908–4022 (AFPVTEIDCA…KNKALRKGFP (115 aa)) form a localizes the protein to the Golgi apparatus region.

Belongs to the VPS13 family. In terms of assembly, interacts with STX6. Interacts with STX12. Interacts with RAB6A isoform 1 (GTP-bound) and isoform 2 (GTP-bound). Interacts with RAB6B (GTP-bound). In terms of tissue distribution, widely expressed. There is apparent differential expression of different transcripts. In fetal brain, lung, liver, and kidney, two transcripts of 2 and 5 kb are identified. These transcripts are also seen in all adult tissues analyzed. A larger transcript (12-14 kb) is expressed in prostate, testis, ovary, and colon in the adult. Expression is very low in adult brain tissue. Expressed in peripheral blood lymphocytes. Isoform 1 and isoform 2 are expressed in brain and retina. Isoform 2 is expressed ubiquitously.

The protein localises to the recycling endosome membrane. It localises to the cytoplasmic vesicle. The protein resides in the secretory vesicle. It is found in the acrosome membrane. Its subcellular location is the golgi apparatus. The protein localises to the cis-Golgi network membrane. It localises to the endoplasmic reticulum-Golgi intermediate compartment membrane. The protein resides in the trans-Golgi network membrane. It is found in the early endosome membrane. Its subcellular location is the lysosome membrane. Its function is as follows. Mediates the transfer of lipids between membranes at organelle contact sites. Binds phosphatidylinositol 3-phosphate. Functions as a tethering factor in the slow endocytic recycling pathway, to assist traffic between early and recycling endosomes. Involved in the transport of proacrosomal vesicles to the nuclear dense lamina (NDL) during spermatid development. Plays a role in the assembly of the Golgi apparatus, possibly by mediating trafficking to the Golgi membrane. Plays a role in the development of the nervous system, and may be required for neuron projection development. May also play a role during adipose tissue development. Required for maintenance of the ocular lens. The protein is Intermembrane lipid transfer protein VPS13B (VPS13B) of Homo sapiens (Human).